The sequence spans 193 residues: Holliday junction branch migration complex subunit RuvA (193 aa).

The interval 1–64 (MIGRIAGILL…EDAHLLYGFL (64 aa)) is domain I. Residues 65–139 (TPQERTTFRE…GKLGADLGAL (75 aa)) are domain II. A flexible linker region spans residues 139-143 (LAGAA). A domain III region spans residues 144-193 (SQSDHATDILNALVALGYSEKEGLAAIKNVPAGTGVSEGIKLALKALSKV).

Belongs to the RuvA family. Homotetramer. Forms an RuvA(8)-RuvB(12)-Holliday junction (HJ) complex. HJ DNA is sandwiched between 2 RuvA tetramers; dsDNA enters through RuvA and exits via RuvB. An RuvB hexamer assembles on each DNA strand where it exits the tetramer. Each RuvB hexamer is contacted by two RuvA subunits (via domain III) on 2 adjacent RuvB subunits; this complex drives branch migration. In the full resolvosome a probable DNA-RuvA(4)-RuvB(12)-RuvC(2) complex forms which resolves the HJ.

Its subcellular location is the cytoplasm. Its function is as follows. The RuvA-RuvB-RuvC complex processes Holliday junction (HJ) DNA during genetic recombination and DNA repair, while the RuvA-RuvB complex plays an important role in the rescue of blocked DNA replication forks via replication fork reversal (RFR). RuvA specifically binds to HJ cruciform DNA, conferring on it an open structure. The RuvB hexamer acts as an ATP-dependent pump, pulling dsDNA into and through the RuvAB complex. HJ branch migration allows RuvC to scan DNA until it finds its consensus sequence, where it cleaves and resolves the cruciform DNA. This Burkholderia ambifaria (strain MC40-6) protein is Holliday junction branch migration complex subunit RuvA.